A 380-amino-acid polypeptide reads, in one-letter code: Erythronate-4-phosphate dehydrogenase (380 aa).

The substrate site is built by S45 and T66. The NAD(+) site is built by D146 and T174. Residue R207 is part of the active site. Residue D231 coordinates NAD(+). The active site involves E236. The active-site Proton donor is the H253. G256 contacts NAD(+). Y257 serves as a coordination point for substrate.

The protein belongs to the D-isomer specific 2-hydroxyacid dehydrogenase family. PdxB subfamily. Homodimer.

The protein localises to the cytoplasm. It carries out the reaction 4-phospho-D-erythronate + NAD(+) = (R)-3-hydroxy-2-oxo-4-phosphooxybutanoate + NADH + H(+). It functions in the pathway cofactor biosynthesis; pyridoxine 5'-phosphate biosynthesis; pyridoxine 5'-phosphate from D-erythrose 4-phosphate: step 2/5. Catalyzes the oxidation of erythronate-4-phosphate to 3-hydroxy-2-oxo-4-phosphonooxybutanoate. The protein is Erythronate-4-phosphate dehydrogenase of Pseudomonas fluorescens (strain ATCC BAA-477 / NRRL B-23932 / Pf-5).